The chain runs to 552 residues: Dihydroxy-acid dehydratase (552 aa).

Position 78 (Asp78) interacts with Mg(2+). Cys119 provides a ligand contact to [2Fe-2S] cluster. Asp120 and Lys121 together coordinate Mg(2+). An N6-carboxylysine modification is found at Lys121. Cys191 contributes to the [2Fe-2S] cluster binding site. Position 442 (Glu442) interacts with Mg(2+). Ser468 functions as the Proton acceptor in the catalytic mechanism.

It belongs to the IlvD/Edd family. Homodimer. Requires [2Fe-2S] cluster as cofactor. Mg(2+) is required as a cofactor.

It catalyses the reaction (2R)-2,3-dihydroxy-3-methylbutanoate = 3-methyl-2-oxobutanoate + H2O. The enzyme catalyses (2R,3R)-2,3-dihydroxy-3-methylpentanoate = (S)-3-methyl-2-oxopentanoate + H2O. It functions in the pathway amino-acid biosynthesis; L-isoleucine biosynthesis; L-isoleucine from 2-oxobutanoate: step 3/4. The protein operates within amino-acid biosynthesis; L-valine biosynthesis; L-valine from pyruvate: step 3/4. Functionally, functions in the biosynthesis of branched-chain amino acids. Catalyzes the dehydration of (2R,3R)-2,3-dihydroxy-3-methylpentanoate (2,3-dihydroxy-3-methylvalerate) into 2-oxo-3-methylpentanoate (2-oxo-3-methylvalerate) and of (2R)-2,3-dihydroxy-3-methylbutanoate (2,3-dihydroxyisovalerate) into 2-oxo-3-methylbutanoate (2-oxoisovalerate), the penultimate precursor to L-isoleucine and L-valine, respectively. The sequence is that of Dihydroxy-acid dehydratase from Ruminiclostridium cellulolyticum (strain ATCC 35319 / DSM 5812 / JCM 6584 / H10) (Clostridium cellulolyticum).